Here is a 1119-residue protein sequence, read N- to C-terminus: Putative transcription factor SEF1 (1119 aa).

Disordered stretches follow at residues 1–70 (MGDP…TQSR) and 86–105 (QNGEDSSNISNNSNAVSKGK). Residues 47-70 (LHTQQSYYGNGTDGASESALTQSR) are compositionally biased toward polar residues. The zn(2)-C6 fungal-type DNA-binding region spans 118–148 (CTHCRQHKIKCNASEKFPAPCSRCERMGLHC). Disordered regions lie at residues 236-290 (QLLQ…PANT), 306-335 (SQQISSSSPQNSSPTTTGHSPANDLSSSKQ), 894-913 (ASSSSTATRLNADNPTTDTN), 926-962 (KKSSKSSDTPTNKPKFNSTSSIPTATPTSEQRAAHNT), and 994-1018 (SADSNGTSNNNIPNSTAPLNTPDTN). Low complexity predominate over residues 243–260 (TTTTNPTTSSNSKVVTPT). Positions 261 to 288 (GSDHSPASHNGGSLSSGKPQLLNDSVPA) are enriched in polar residues. A compositionally biased stretch (low complexity) spans 306-322 (SQQISSSSPQNSSPTTT). Polar residues-rich tracts occupy residues 323 to 335 (GHSPANDLSSSKQ), 902 to 913 (RLNADNPTTDTN), and 931 to 942 (SSDTPTNKPKFN). Low complexity predominate over residues 943–954 (STSSIPTATPTS).

It localises to the nucleus. In terms of biological role, putative transcription factor. Suppresses the lethal phenotype of RPM2 deletion. The chain is Putative transcription factor SEF1 (SEF1) from Kluyveromyces lactis (strain ATCC 8585 / CBS 2359 / DSM 70799 / NBRC 1267 / NRRL Y-1140 / WM37) (Yeast).